The primary structure comprises 199 residues: Secreted chorismate mutase (199 aa).

A signal peptide spans 1-33 (MLTRPREIYLATAVSIGILLSLIAPLGPPLARA). Residues 34-113 (DGTSQLAELV…ATEAIEYSRF (80 aa)) enclose the Chorismate mutase domain. Residues Arg49, Lys60, Asp69, 72–76 (RVEQQ), 105–109 (TEAIE), and Arg134 contribute to the substrate site. An intrachain disulfide couples Cys160 to Cys193.

Homodimer.

It is found in the secreted. It carries out the reaction chorismate = prephenate. The protein operates within metabolic intermediate biosynthesis; prephenate biosynthesis; prephenate from chorismate: step 1/1. Tyrosine, phenylalanine, and tryptophan moderately enhance chorismate mutase activity at low concentrations, but allosterically inhibit the enzyme at higher concentrations. Functionally, catalyzes the Claisen rearrangement of chorismate to prephenate. May play some role in the pathogenicity. This is Secreted chorismate mutase from Mycobacterium tuberculosis (strain ATCC 25618 / H37Rv).